Reading from the N-terminus, the 225-residue chain is Phosphoribosyltransferase domain-containing protein 1 (225 aa).

Alanine 2 is modified (N-acetylalanine). Mg(2+) is bound by residues glutamate 141 and aspartate 142. Residues 141 to 149 (EDVVGTGRT), lysine 173, 194 to 195 (FV), and aspartate 201 contribute to the GMP site. Aspartate 201 is a binding site for Mg(2+).

This sequence belongs to the purine/pyrimidine phosphoribosyltransferase family. Homodimer.

In terms of biological role, has low, barely detectable phosphoribosyltransferase activity (in vitro). Binds GMP, IMP and alpha-D-5-phosphoribosyl 1-pyrophosphate (PRPP). Is not expected to contribute to purine metabolism or GMP salvage. The polypeptide is Phosphoribosyltransferase domain-containing protein 1 (PRTFDC1) (Homo sapiens (Human)).